Here is a 396-residue protein sequence, read N- to C-terminus: Acetate kinase (396 aa).

Asn-8 contacts Mg(2+). Residue Lys-15 participates in ATP binding. Arg-89 contributes to the substrate binding site. Asp-146 functions as the Proton donor/acceptor in the catalytic mechanism. ATP-binding positions include 206–210, 280–282, and 328–332; these read HLGNG, DMR, and GVGEN. Position 382 (Glu-382) interacts with Mg(2+).

It belongs to the acetokinase family. As to quaternary structure, homodimer. It depends on Mg(2+) as a cofactor. Mn(2+) serves as cofactor.

It localises to the cytoplasm. The enzyme catalyses acetate + ATP = acetyl phosphate + ADP. It functions in the pathway metabolic intermediate biosynthesis; acetyl-CoA biosynthesis; acetyl-CoA from acetate: step 1/2. Its function is as follows. Catalyzes the formation of acetyl phosphate from acetate and ATP. Can also catalyze the reverse reaction. The polypeptide is Acetate kinase (Clavibacter sepedonicus (Clavibacter michiganensis subsp. sepedonicus)).